Consider the following 1096-residue polypeptide: Adenylate-forming reductase Nps9 (1096 aa).

Positions 39-352 (DDTLTEISFL…TTEFGAPTQL (314 aa)) are adenylation (A) domain. AMP contacts are provided by residues H236, 339-340 (VQ), T344, and 425-428 (IIGR). The region spanning 569-656 (EWTVSTLEHW…LLADRVAKIA (88 aa)) is the Carrier domain. S605 carries the O-(pantetheine 4'-phosphoryl)serine modification. The interval 716 to 952 (LTGSTGGLGS…MPAEKVSAAI (237 aa)) is reductase (R) domain. Residues 720–723 (TGGL), 807–809 (SAW), Y880, and K884 each bind NADP(+).

This sequence belongs to the adenylate-forming reductase family.

Adenylate-forming reductase, a natural product biosynthesis enzyme that resembles non-ribosomal peptide synthetases, yet serves to modify one substrate, rather than to condense two or more building blocks. The A-domain preferentially accepts L-threonine as substrate. The natural product of the enzyme is not yet known. The protein is Adenylate-forming reductase Nps9 of Serpula lacrymans var. lacrymans (strain S7.9) (Dry rot fungus).